A 209-amino-acid chain; its full sequence is Claudin-like protein ZF-A9 (209 aa).

A run of 4 helical transmembrane segments spans residues 8-28 (LGTT…AIPL), 81-101 (AILV…FAGG), 114-134 (ALVA…GLVP), and 159-179 (FGAA…GGGL). The disordered stretch occupies residues 187–209 (GRTSSRGRYTPASQNGRERSEYV). Residues 188–201 (RTSSRGRYTPASQN) are compositionally biased toward polar residues.

This sequence belongs to the claudin family.

The protein localises to the cell membrane. It is found in the cell junction. Its subcellular location is the tight junction. Its function is as follows. Component of tight junction (TJ) strands. The protein is Claudin-like protein ZF-A9 (cldng) of Danio rerio (Zebrafish).